A 287-amino-acid chain; its full sequence is MKDRLAELLDLSKQYDQQFPDGDDEFDSPHEDIVFETDHILESLYRDIRDIQDENQLLVADVKRLGKQNARFLTSMRRLSSIKRDTNSIAKAIKARGEVIHCKLRAMKELSEAAEAQHGPHSAVARISRAQYNALTLTFQRAMHDYNQAEMKQRDNCKIRIQRQLEIMGKEVSGDQIEDMFEQGKWDVFSENLLADVKGARAALNEIESRHRELLRLESRIRDVHELFLQMAVLVEKQADTLNVIELNVQKTVDYTGQAKAQVRKAVQYEEKNPCRTLCCFCCPCLK.

Residues 41–71 (LESLYRDIRDIQDENQLLVADVKRLGKQNAR) are a coiled coil. The t-SNARE coiled-coil homology domain occupies 204–266 (LNEIESRHRE…GQAKAQVRKA (63 aa)).

This sequence belongs to the syntaxin family. In terms of assembly, interacts with the SNARE proteins SNAP-23 and VAMP.

The protein localises to the membrane. It localises to the golgi apparatus. Its subcellular location is the trans-Golgi network membrane. SNARE that acts to regulate protein transport between late endosomes and the trans-Golgi network. This Homo sapiens (Human) protein is Syntaxin-11 (STX11).